A 321-amino-acid chain; its full sequence is Glucokinase (321 aa).

8-13 is a binding site for ATP; it reads GDVGGT.

The protein belongs to the bacterial glucokinase family.

Its subcellular location is the cytoplasm. It carries out the reaction D-glucose + ATP = D-glucose 6-phosphate + ADP + H(+). The chain is Glucokinase from Escherichia fergusonii (strain ATCC 35469 / DSM 13698 / CCUG 18766 / IAM 14443 / JCM 21226 / LMG 7866 / NBRC 102419 / NCTC 12128 / CDC 0568-73).